Reading from the N-terminus, the 469-residue chain is Collagenase 3 (469 aa).

An N-terminal signal peptide occupies residues 1 to 17 (SSLSVLVLSLSFAYCLS). Residues 18–100 (APVPQDEDSE…QPRCGVPDVG (83 aa)) constitute a propeptide, activation peptide. Positions 92–99 (PRCGVPDV) match the Cysteine switch motif. Cysteine 94 is a binding site for Zn(2+). An N-linked (GlcNAc...) asparagine glycan is attached at asparagine 115. Aspartate 126 provides a ligand contact to Ca(2+). A glycan (N-linked (GlcNAc...) asparagine) is linked at asparagine 150. Aspartate 160 contributes to the Ca(2+) binding site. The Zn(2+) site is built by histidine 170 and aspartate 172. Residues aspartate 177, glycine 178, and leucine 182 each coordinate Ca(2+). Zn(2+) is bound at residue histidine 185. Ca(2+) contacts are provided by glycine 194 and aspartate 196. Residue histidine 198 coordinates Zn(2+). The Ca(2+) site is built by aspartate 200, aspartate 201, and glutamate 203. Histidine 220 contributes to the Zn(2+) binding site. The active site involves glutamate 221. Histidine 224, histidine 230, and methionine 238 together coordinate Zn(2+). The interaction with collagen stretch occupies residues 266-469 (PGNRDPHPKH…ILKTNFVLMC (204 aa)). Hemopexin repeat units lie at residues 279 to 328 (PEKC…WPEL), 329 to 375 (PNKL…GFPK), 377 to 425 (LKAI…FPGI), and 426 to 469 (GEKV…VLMC). Cysteine 282 and cysteine 469 are oxidised to a cystine. 6 residues coordinate Ca(2+): aspartate 289, isoleucine 291, aspartate 333, alanine 335, alanine 383, and aspartate 430.

It belongs to the peptidase M10A family. It depends on Ca(2+) as a cofactor. Zn(2+) serves as cofactor. In terms of processing, the proenzyme is activated by removal of the propeptide; this cleavage can be effected by other matrix metalloproteinases and may involve several cleavage steps. Cleavage can also be autocatalytic, after partial maturation by another protease or after treatment with 4-aminophenylmercuric acetate (APMA) (in vitro).

The protein localises to the secreted. The protein resides in the extracellular space. Its subcellular location is the extracellular matrix. Its function is as follows. Plays a role in the degradation of extracellular matrix proteins including fibrillar collagen, fibronectin, TNC and ACAN. Cleaves several types of triple helical collagen. May also function by activating or degrading key regulatory proteins. Plays a role in wound healing, tissue remodeling, cartilage degradation, bone development, bone mineralization and ossification. The chain is Collagenase 3 (mmp13) from Xenopus laevis (African clawed frog).